Consider the following 1737-residue polypeptide: Complement C4 (1737 aa).

The N-terminal stretch at 1–19 (MRLLWGLAWAFSFFASSLQ) is a signal peptide. Cys66 and Cys95 are joined by a disulfide. Asn224 and Asn664 each carry an N-linked (GlcNAc...) asparagine glycan. A disulfide bridge connects residues Cys633 and Cys667. A propeptide spanning residues 674 to 677 (RQKR) is cleaved from the precursor. Disulfide bonds link Cys700–Cys726, Cys701–Cys733, and Cys714–Cys734. The Anaphylatoxin-like domain maps to 700–734 (CCQDGMTKLPMARTCEQRAARVPQPACREPFLSCC). A glycan (N-linked (GlcNAc...) asparagine) is linked at Asn743. The segment at residues 1005–1008 (CAEQ) is a cross-link (isoglutamyl cysteine thioester (Cys-Gln)). Residues Asn1323 and Asn1386 are each glycosylated (N-linked (GlcNAc...) asparagine). Sulfotyrosine occurs at positions 1412, 1414, and 1416. The propeptide occupies 1443-1446 (RRRR). Cystine bridges form between Cys1464–Cys1528, Cys1576–Cys1581, Cys1588–Cys1666, Cys1611–Cys1735, and Cys1711–Cys1720. The NTR domain maps to 1588-1735 (CPRQRRSLER…FLQEYSSQGC (148 aa)). Tyr1676 carries the post-translational modification Sulfotyrosine.

In terms of assembly, in absence of complement activation, circulates in blood as a disulfide-linked trimer of an alpha, beta and gamma chain. As to quaternary structure, complement C4b is composed of complement C4b-A, complement C4 beta and complement C4 gamma chains that are associated via disulfide bonds. Non-enzymatic component of the C3 convertase, also named C4bC2b, composed of the serine protease complement C2b (C2), as well as complement C4b. Non-enzymatic component of the C5 convertase, also named C4bC2bC3b, composed of the serine protease complement C2b (C2), complement C3b, as well as complement C4b. Prior to secretion, the single-chain precursor is enzymatically cleaved by plasminogen (PLG) to yield non-identical chains alpha, beta and gamma. During activation of the complement systems, the alpha chain is cleaved into C4a and C4b by different proteases depending on the complement pathway: C4b stays linked to the beta and gamma chains, while C4a is released in the plasma. The alpha chain is cleaved by C1S to generate C4a and C4b following activation by the classical complement system. The alpha chain is cleaved to generate C4a and C4b by MASP2 following activation by the lectin complement system. The alpha chain is cleaved by GZMK to generate C4a and C4b following activation by the GZMK complement system. Further degradation of C4b by C1 into the inactive fragments C4c and C4d blocks the generation of C3 convertase. The proteolytic cleavages often are incomplete so that many structural forms can be found in plasma. In terms of processing, upon activation, the internal thioester bond reacts with carbohydrate antigens on the target surface to form amide or ester bonds, leading to covalent association with the surface of pathogens. Post-translationally, complement C4b interacts with complement C3b via a thioester linkage. N- and O-glycosylated. O-glycosylated with a core 1 or possibly core 8 glycan.

The protein resides in the secreted. Its subcellular location is the cell surface. Precursor of non-enzymatic components of the classical, lectin and GZMK complement pathways, which consist in a cascade of proteins that leads to phagocytosis and breakdown of pathogens and signaling that strengthens the adaptive immune system. Its function is as follows. Non-enzymatic component of C3 and C5 convertases. Generated following cleavage by complement proteases (C1S, MASP2 or GZMK, depending on the complement pathway), it covalently attaches to the surface of pathogens, where it acts as an opsonin that marks the surface of antigens for removal. It then recruits the serine protease complement C2b to form the C3 and C5 convertases, which cleave and activate C3 and C5, respectively, the next components of the complement pathways. Complement C4b-A isotype is responsible for effective binding to form amide bonds with immune aggregates or protein antigens, while complement C4b-B isotype catalyzes the transacylation of the thioester carbonyl group to form ester bonds with carbohydrate antigens. In terms of biological role, putative humoral mediator released following cleavage by complement proteases (C1S, MASP2 or GZMK, depending on the complement pathway). While it is strongly similar to anaphylatoxins, its role is unclear. Was reported to act as a mediator of local inflammatory process; however these effects were probably due to contamination with C3a and/C5a anaphylatoxins in biological assays. The sequence is that of Complement C4 from Rattus norvegicus (Rat).